Here is a 291-residue protein sequence, read N- to C-terminus: Putative carboxymethylenebutenolidase (291 aa).

The signal sequence occupies residues 1-40 (MTAFDADLRSLAAQTTLSRRTVIATSLATGFALAVQPVAA). Residues Cys-170, Asp-227, and His-259 contribute to the active site.

Belongs to the dienelactone hydrolase family.

The enzyme catalyses 2-(5-oxo-2,5-dihydrofuran-2-ylidene)acetate + H2O = 4-oxohex-2-enedioate + H(+). The polypeptide is Putative carboxymethylenebutenolidase (Methylorubrum extorquens (strain ATCC 14718 / DSM 1338 / JCM 2805 / NCIMB 9133 / AM1) (Methylobacterium extorquens)).